Reading from the N-terminus, the 232-residue chain is 5'-methylthioadenosine/S-adenosylhomocysteine nucleosidase (232 aa).

Catalysis depends on E12, which acts as the Proton acceptor. Substrate contacts are provided by residues G78, M153, and 174-175; that span reads ME. The active-site Proton donor is the D198.

This sequence belongs to the PNP/UDP phosphorylase family. MtnN subfamily.

It carries out the reaction S-adenosyl-L-homocysteine + H2O = S-(5-deoxy-D-ribos-5-yl)-L-homocysteine + adenine. It catalyses the reaction S-methyl-5'-thioadenosine + H2O = 5-(methylsulfanyl)-D-ribose + adenine. The enzyme catalyses 5'-deoxyadenosine + H2O = 5-deoxy-D-ribose + adenine. It participates in amino-acid biosynthesis; L-methionine biosynthesis via salvage pathway; S-methyl-5-thio-alpha-D-ribose 1-phosphate from S-methyl-5'-thioadenosine (hydrolase route): step 1/2. Catalyzes the irreversible cleavage of the glycosidic bond in both 5'-methylthioadenosine (MTA) and S-adenosylhomocysteine (SAH/AdoHcy) to adenine and the corresponding thioribose, 5'-methylthioribose and S-ribosylhomocysteine, respectively. Also cleaves 5'-deoxyadenosine, a toxic by-product of radical S-adenosylmethionine (SAM) enzymes, into 5-deoxyribose and adenine. This chain is 5'-methylthioadenosine/S-adenosylhomocysteine nucleosidase, found in Anoxybacillus flavithermus (strain DSM 21510 / WK1).